Consider the following 298-residue polypeptide: tRNA pseudouridine synthase B (298 aa).

Aspartate 44 serves as the catalytic Nucleophile.

The protein belongs to the pseudouridine synthase TruB family. Type 1 subfamily.

The enzyme catalyses uridine(55) in tRNA = pseudouridine(55) in tRNA. Its function is as follows. Responsible for synthesis of pseudouridine from uracil-55 in the psi GC loop of transfer RNAs. The sequence is that of tRNA pseudouridine synthase B from Mycobacteroides abscessus (strain ATCC 19977 / DSM 44196 / CCUG 20993 / CIP 104536 / JCM 13569 / NCTC 13031 / TMC 1543 / L948) (Mycobacterium abscessus).